A 414-amino-acid polypeptide reads, in one-letter code: Nuclear hormone receptor family member nhr-213 (414 aa).

The nuclear receptor DNA-binding region spans 21–99 (IVLCKVCALS…LGMTPENVQF (79 aa)). 2 NR C4-type zinc fingers span residues 24-44 (CKVC…CRAC) and 62-82 (CKKG…CRLC). In terms of domain architecture, NR LBD spans 162–414 (SAAKKMNSLE…DFSDPDIFDC (253 aa)).

This sequence belongs to the nuclear hormone receptor family.

It is found in the nucleus. In terms of biological role, orphan nuclear receptor. The protein is Nuclear hormone receptor family member nhr-213 (nhr-213) of Caenorhabditis elegans.